The chain runs to 427 residues: MSVEHATPVQQPAHAAASVRPVMILAGGTGGHIFPGLAVAKVLRARGVPVTWLGADGAMETRLVPQHAIQIDTLAISGLRGKGIVKLLGAPVRVMRAVRAAGFVLRKRQPRAVISFGGFAAGPGGLAARLLGVPLLVHEQNRAPGMTNKVLSRFARRVLTGFPGSFAGEEAVGNPVREEIAALPAPATRLIGRGGPVRLLVLGGSQGARALNNAVPAALAALGHPAVDVRHQCGEKLRAEAEAAYAQAAVNASVEPFIADMAAAYAWADLVVCRAGASTLAEVCAAGVGSVLVPFAAAVDDHQTRNAEYLVSAEAAVLLKQDGTLAVRLQQVLQTLLADPARRLAMAQAARTLAKPDAAERIADIILQEAGNGKSGMGNGQSTEQLQEHTVIHQNKRTDQALDAASASLHPIPDSRFPIRTSAGGAQ.

Residues 29–31, Asn141, Arg177, Ser205, Ile258, and Gln303 each bind UDP-N-acetyl-alpha-D-glucosamine; that span reads TGG. Residues 408-427 are disordered; the sequence is SLHPIPDSRFPIRTSAGGAQ.

It belongs to the glycosyltransferase 28 family. MurG subfamily.

It is found in the cell inner membrane. The catalysed reaction is di-trans,octa-cis-undecaprenyl diphospho-N-acetyl-alpha-D-muramoyl-L-alanyl-D-glutamyl-meso-2,6-diaminopimeloyl-D-alanyl-D-alanine + UDP-N-acetyl-alpha-D-glucosamine = di-trans,octa-cis-undecaprenyl diphospho-[N-acetyl-alpha-D-glucosaminyl-(1-&gt;4)]-N-acetyl-alpha-D-muramoyl-L-alanyl-D-glutamyl-meso-2,6-diaminopimeloyl-D-alanyl-D-alanine + UDP + H(+). Its pathway is cell wall biogenesis; peptidoglycan biosynthesis. Its function is as follows. Cell wall formation. Catalyzes the transfer of a GlcNAc subunit on undecaprenyl-pyrophosphoryl-MurNAc-pentapeptide (lipid intermediate I) to form undecaprenyl-pyrophosphoryl-MurNAc-(pentapeptide)GlcNAc (lipid intermediate II). This chain is UDP-N-acetylglucosamine--N-acetylmuramyl-(pentapeptide) pyrophosphoryl-undecaprenol N-acetylglucosamine transferase, found in Xanthomonas campestris pv. campestris (strain B100).